Reading from the N-terminus, the 95-residue chain is Integration host factor subunit alpha (95 aa).

The disordered stretch occupies residues 51-71 (NFDLRDKNERPGRNPKTGEDI). Residues 53–69 (DLRDKNERPGRNPKTGE) are compositionally biased toward basic and acidic residues.

Belongs to the bacterial histone-like protein family. As to quaternary structure, heterodimer of an alpha and a beta chain.

In terms of biological role, this protein is one of the two subunits of integration host factor, a specific DNA-binding protein that functions in genetic recombination as well as in transcriptional and translational control. This chain is Integration host factor subunit alpha, found in Vibrio vulnificus (strain CMCP6).